The following is a 53-amino-acid chain: Natriuretic peptide DNP-2 (53 aa).

Cys-7 and Cys-23 are oxidised to a cystine. The propeptide occupies Ile-39–Ala-53.

The protein belongs to the natriuretic peptide family. In terms of tissue distribution, expressed by the venom gland.

It is found in the secreted. Its function is as follows. Exhibits vasodilator, natriuretic and diuretic properties in animal models and human tissues. Acts by stimulating cGMP via the natriuretic peptide receptor 1 (NPR1). Is a poor agonist of the atrial natriuretic peptide receptor 2 (NPR2). Is not degraded by neutral endopeptidase (NEP/MME). Binds to atrial natriuretic peptide clearance receptor (NPR-C/NPR3), which may be responsible of the removal of DNP from the circulation. Increases calcium uptake and induces histamine release from rat peritoneal mast cells. Increases calcium-activated potassium (KCa) current in gastric antral circular smooth muscle cells by increasing cGMP production and activating inositol trisphosphate receptors (IP3Rs). In vivo, reduces both systolic and diastolic blood pressure with no effect on heart rate, when intravenously injected in conscious rabbits. The sequence is that of Natriuretic peptide DNP-2 from Dendroaspis angusticeps (Eastern green mamba).